The chain runs to 167 residues: SsrA-binding protein (167 aa).

A disordered region spans residues 139–167; sequence QAHDKRHAEKEREWQRDKQRIMRAHNRNA. The span at 144–158 shows a compositional bias: basic and acidic residues; sequence RHAEKEREWQRDKQR.

Belongs to the SmpB family.

The protein localises to the cytoplasm. Its function is as follows. Required for rescue of stalled ribosomes mediated by trans-translation. Binds to transfer-messenger RNA (tmRNA), required for stable association of tmRNA with ribosomes. tmRNA and SmpB together mimic tRNA shape, replacing the anticodon stem-loop with SmpB. tmRNA is encoded by the ssrA gene; the 2 termini fold to resemble tRNA(Ala) and it encodes a 'tag peptide', a short internal open reading frame. During trans-translation Ala-aminoacylated tmRNA acts like a tRNA, entering the A-site of stalled ribosomes, displacing the stalled mRNA. The ribosome then switches to translate the ORF on the tmRNA; the nascent peptide is terminated with the 'tag peptide' encoded by the tmRNA and targeted for degradation. The ribosome is freed to recommence translation, which seems to be the essential function of trans-translation. This Xylella fastidiosa (strain M23) protein is SsrA-binding protein.